A 302-amino-acid polypeptide reads, in one-letter code: Recombination-associated protein RdgC (302 aa).

It belongs to the RdgC family.

Its subcellular location is the cytoplasm. The protein localises to the nucleoid. Its function is as follows. May be involved in recombination. This Actinobacillus pleuropneumoniae serotype 5b (strain L20) protein is Recombination-associated protein RdgC.